We begin with the raw amino-acid sequence, 427 residues long: 3-phosphoshikimate 1-carboxyvinyltransferase (427 aa).

Residue lysine 20 participates in phosphoenolpyruvate binding. 3-phosphoshikimate-binding residues include serine 21 and arginine 25. Residues glycine 92 and arginine 120 each coordinate phosphoenolpyruvate. The 3-phosphoshikimate site is built by serine 166, alanine 167, glutamine 168, aspartate 312, and lysine 339. Residue glutamine 168 participates in phosphoenolpyruvate binding. Aspartate 312 functions as the Proton acceptor in the catalytic mechanism. 2 residues coordinate phosphoenolpyruvate: arginine 343 and arginine 385.

Homotetramer.

Its subcellular location is the cytoplasm. It carries out the reaction 3-phosphoshikimate + phosphoenolpyruvate = 5-O-(1-carboxyvinyl)-3-phosphoshikimate + phosphate. Its pathway is metabolic intermediate biosynthesis; chorismate biosynthesis; chorismate from D-erythrose 4-phosphate and phosphoenolpyruvate: step 6/7. Its activity is regulated as follows. Competitively inhibited by glyphosate. Activated by ammonium, rubidium or potassium ions. Its function is as follows. Catalyzes the transfer of the enolpyruvyl moiety of phosphoenolpyruvate (PEP) to the 5-hydroxyl of shikimate-3-phosphate (S3P) to produce enolpyruvyl shikimate-3-phosphate and inorganic phosphate. The protein is 3-phosphoshikimate 1-carboxyvinyltransferase of Streptococcus pneumoniae serotype 4 (strain ATCC BAA-334 / TIGR4).